Here is a 118-residue protein sequence, read N- to C-terminus: DNA polymerase epsilon subunit 4 (118 aa).

Low complexity-rich tracts occupy residues Met-1–Thr-11 and Gly-19–Gly-35. The tract at residues Met-1–Val-37 is disordered. Ala-2 carries the N-acetylalanine modification. Position 11 is a phosphothreonine (Thr-11). Ser-25 is modified (phosphoserine).

As to quaternary structure, component of the DNA polymerase epsilon complex consisting of four subunits: the catalytic subunit POLE and the accessory subunits POLE2, POLE3 and POLE4. Interaction with POLE3 is a prerequisite for further binding with POLE and POLE2.

It is found in the nucleus. Functionally, accessory component of the DNA polymerase epsilon complex. Participates in DNA repair and in chromosomal DNA replication. The sequence is that of DNA polymerase epsilon subunit 4 (Pole4) from Mus musculus (Mouse).